The chain runs to 205 residues: N-(5'-phosphoribosyl)anthranilate isomerase (205 aa).

The protein belongs to the TrpF family.

It carries out the reaction N-(5-phospho-beta-D-ribosyl)anthranilate = 1-(2-carboxyphenylamino)-1-deoxy-D-ribulose 5-phosphate. It participates in amino-acid biosynthesis; L-tryptophan biosynthesis; L-tryptophan from chorismate: step 3/5. The sequence is that of N-(5'-phosphoribosyl)anthranilate isomerase from Marinomonas sp. (strain MWYL1).